A 29-amino-acid polypeptide reads, in one-letter code: Cytochrome b6-f complex subunit 8 (29 aa).

A helical membrane pass occupies residues 3–23 (LITITWASVMVAFTFSLSLVV).

This sequence belongs to the PetN family. As to quaternary structure, the 4 large subunits of the cytochrome b6-f complex are cytochrome b6, subunit IV (17 kDa polypeptide, PetD), cytochrome f and the Rieske protein, while the 4 small subunits are PetG, PetL, PetM and PetN. The complex functions as a dimer.

It localises to the plastid. The protein resides in the chloroplast thylakoid membrane. Its function is as follows. Component of the cytochrome b6-f complex, which mediates electron transfer between photosystem II (PSII) and photosystem I (PSI), cyclic electron flow around PSI, and state transitions. This chain is Cytochrome b6-f complex subunit 8, found in Chaetosphaeridium globosum (Charophycean green alga).